Consider the following 482-residue polypeptide: tRNA sulfurtransferase (482 aa).

One can recognise a THUMP domain in the interval 61–165 (AEVLEILTHT…NDRLNQVLAS (105 aa)). ATP contacts are provided by residues 183-184 (LI), K265, G287, and Q296. C344 and C456 form a disulfide bridge. The region spanning 404–482 (VEEHAIVLDI…GFNNVKVYRP (79 aa)) is the Rhodanese domain. C456 functions as the Cysteine persulfide intermediate in the catalytic mechanism.

It belongs to the ThiI family.

Its subcellular location is the cytoplasm. It carries out the reaction [ThiI sulfur-carrier protein]-S-sulfanyl-L-cysteine + a uridine in tRNA + 2 reduced [2Fe-2S]-[ferredoxin] + ATP + H(+) = [ThiI sulfur-carrier protein]-L-cysteine + a 4-thiouridine in tRNA + 2 oxidized [2Fe-2S]-[ferredoxin] + AMP + diphosphate. The enzyme catalyses [ThiS sulfur-carrier protein]-C-terminal Gly-Gly-AMP + S-sulfanyl-L-cysteinyl-[cysteine desulfurase] + AH2 = [ThiS sulfur-carrier protein]-C-terminal-Gly-aminoethanethioate + L-cysteinyl-[cysteine desulfurase] + A + AMP + 2 H(+). The protein operates within cofactor biosynthesis; thiamine diphosphate biosynthesis. Functionally, catalyzes the ATP-dependent transfer of a sulfur to tRNA to produce 4-thiouridine in position 8 of tRNAs, which functions as a near-UV photosensor. Also catalyzes the transfer of sulfur to the sulfur carrier protein ThiS, forming ThiS-thiocarboxylate. This is a step in the synthesis of thiazole, in the thiamine biosynthesis pathway. The sulfur is donated as persulfide by IscS. The chain is tRNA sulfurtransferase from Vibrio campbellii (strain ATCC BAA-1116).